The sequence spans 167 residues: Phospholipase A2 (167 aa).

The Ca(2+) site is built by W38, G40, and G42. Disulfide bonds link C39–C61, C60–C99, C67–C92, C90–C127, and C132–C144. N-linked (GlcNAc...) asparagine glycosylation occurs at N47. Residue H64 is part of the active site. D65 contributes to the Ca(2+) binding site. Positions 136–140 (ARSAR) are excised as a propeptide.

The protein belongs to the phospholipase A2 family. Group III subfamily. Heterodimer composed of a large subunit and a small subunit; disulfide-linked. It depends on Ca(2+) as a cofactor. As to expression, expressed by the venom gland.

It localises to the secreted. The enzyme catalyses a 1,2-diacyl-sn-glycero-3-phosphocholine + H2O = a 1-acyl-sn-glycero-3-phosphocholine + a fatty acid + H(+). Its function is as follows. Phospholipase toxin, which catalyzes the calcium-dependent hydrolysis of the 2-acyl groups in 3-sn-phosphoglycerides. Inhibits both skeletal (RYR1) and cardiac (RYR2) ryanodine receptors (calcium release channels). Probably blocks ryanodine receptors by generating a lipid product. Shows hemolytic activity, but it is not know if it is direct or indirect. The chain is Phospholipase A2 from Hottentotta tamulus (Eastern Indian scorpion).